The primary structure comprises 339 residues: Holliday junction branch migration complex subunit RuvB (339 aa).

The tract at residues 1 to 22 (MIDADPTLRPEPLPEDNDRALR) is disordered. Residues 1 to 182 (MIDADPTLRP…FGIPTRLQFY (182 aa)) form a large ATPase domain (RuvB-L) region. Residues leucine 21, arginine 22, glycine 63, lysine 66, threonine 67, threonine 68, 129–131 (EDF), arginine 172, tyrosine 182, and arginine 219 contribute to the ATP site. Threonine 67 serves as a coordination point for Mg(2+). The small ATPAse domain (RuvB-S) stretch occupies residues 183–253 (TIDELFEIVS…LADGALTRLG (71 aa)). Positions 256–339 (QLGLDGADRR…PPKSQSDLFG (84 aa)) are head domain (RuvB-H). DNA contacts are provided by arginine 292, arginine 311, and arginine 316.

Belongs to the RuvB family. In terms of assembly, homohexamer. Forms an RuvA(8)-RuvB(12)-Holliday junction (HJ) complex. HJ DNA is sandwiched between 2 RuvA tetramers; dsDNA enters through RuvA and exits via RuvB. An RuvB hexamer assembles on each DNA strand where it exits the tetramer. Each RuvB hexamer is contacted by two RuvA subunits (via domain III) on 2 adjacent RuvB subunits; this complex drives branch migration. In the full resolvosome a probable DNA-RuvA(4)-RuvB(12)-RuvC(2) complex forms which resolves the HJ.

It is found in the cytoplasm. It carries out the reaction ATP + H2O = ADP + phosphate + H(+). Functionally, the RuvA-RuvB-RuvC complex processes Holliday junction (HJ) DNA during genetic recombination and DNA repair, while the RuvA-RuvB complex plays an important role in the rescue of blocked DNA replication forks via replication fork reversal (RFR). RuvA specifically binds to HJ cruciform DNA, conferring on it an open structure. The RuvB hexamer acts as an ATP-dependent pump, pulling dsDNA into and through the RuvAB complex. RuvB forms 2 homohexamers on either side of HJ DNA bound by 1 or 2 RuvA tetramers; 4 subunits per hexamer contact DNA at a time. Coordinated motions by a converter formed by DNA-disengaged RuvB subunits stimulates ATP hydrolysis and nucleotide exchange. Immobilization of the converter enables RuvB to convert the ATP-contained energy into a lever motion, pulling 2 nucleotides of DNA out of the RuvA tetramer per ATP hydrolyzed, thus driving DNA branch migration. The RuvB motors rotate together with the DNA substrate, which together with the progressing nucleotide cycle form the mechanistic basis for DNA recombination by continuous HJ branch migration. Branch migration allows RuvC to scan DNA until it finds its consensus sequence, where it cleaves and resolves cruciform DNA. The protein is Holliday junction branch migration complex subunit RuvB of Ruegeria sp. (strain TM1040) (Silicibacter sp.).